The sequence spans 339 residues: MKFVDEAFVRVEAGNGGHGCLSFRREKFIPRGGPDGGDGGDGGSVYFVADKSVNTLVEFRYQRLLRAQNGQPGMGRLRSGKKGEDLIVPVPLGTTVYDKETSELIGDLIEAGDKLCVARGGRHGLGNTHFKSSTNRAPRRTTSGEEGEARELKLELKLLADVGLLGLPNAGKSTFIHAVSKATPKIADYPFTTLYPHLGVVRVEEYRSFVIADIPGLIEGASEGAGLGVQFLKHLERTQLLLHIVDIAPLDGSDPVQSIQAIISELEQFSQNLSQKPRWLVFNKIDLLAPDVAQARCQEIINRLNWKGPVYKISAIKRQGTELLCYDLMSFLETNQRSI.

Residues 1 to 159 (MKFVDEAFVR…RELKLELKLL (159 aa)) form the Obg domain. A disordered region spans residues 127-147 (NTHFKSSTNRAPRRTTSGEEG). Positions 160–333 (ADVGLLGLPN…LCYDLMSFLE (174 aa)) constitute an OBG-type G domain. Residues 166 to 173 (GLPNAGKS), 191 to 195 (FTTLY), 213 to 216 (DIPG), 283 to 286 (NKID), and 314 to 316 (SAI) contribute to the GTP site. Mg(2+) is bound by residues Ser-173 and Thr-193.

This sequence belongs to the TRAFAC class OBG-HflX-like GTPase superfamily. OBG GTPase family. Monomer. Mg(2+) is required as a cofactor.

It localises to the cytoplasm. An essential GTPase which binds GTP, GDP and possibly (p)ppGpp with moderate affinity, with high nucleotide exchange rates and a fairly low GTP hydrolysis rate. Plays a role in control of the cell cycle, stress response, ribosome biogenesis and in those bacteria that undergo differentiation, in morphogenesis control. This is GTPase Obg from Coxiella burnetii (strain CbuK_Q154) (Coxiella burnetii (strain Q154)).